The primary structure comprises 233 residues: Auxin-responsive protein IAA11 (233 aa).

Disordered stretches follow at residues 1–27 (MAGL…RSSG) and 46–100 (PAAV…PKAQ). Positions 11–15 (LRLGL) match the EAR-like (transcriptional repression) motif. Residues 54-63 (GAQEDKEDAD) are compositionally biased toward acidic residues. Positions 122–217 (AALVKVSMDG…SCKRLRIMKG (96 aa)) constitute a PB1 domain.

Belongs to the Aux/IAA family. Homodimers and heterodimers. In terms of tissue distribution, highly expressed in etiolated shoots. Expressed in roots.

Its subcellular location is the nucleus. Aux/IAA proteins are short-lived transcriptional factors that function as repressors of early auxin response genes at low auxin concentrations. The chain is Auxin-responsive protein IAA11 (IAA11) from Oryza sativa subsp. japonica (Rice).